Consider the following 447-residue polypeptide: Glutamyl-tRNA reductase (447 aa).

Residues 45 to 48, S111, 116 to 118, and Q122 each bind substrate; these read TCNR and ETE. C46 functions as the Nucleophile in the catalytic mechanism. 191–196 is a binding site for NADP(+); that stretch reads GTGKYA.

Belongs to the glutamyl-tRNA reductase family. Homodimer.

It catalyses the reaction (S)-4-amino-5-oxopentanoate + tRNA(Glu) + NADP(+) = L-glutamyl-tRNA(Glu) + NADPH + H(+). It functions in the pathway porphyrin-containing compound metabolism; protoporphyrin-IX biosynthesis; 5-aminolevulinate from L-glutamyl-tRNA(Glu): step 1/2. Its function is as follows. Catalyzes the NADPH-dependent reduction of glutamyl-tRNA(Glu) to glutamate 1-semialdehyde (GSA). In Tropheryma whipplei (strain Twist) (Whipple's bacillus), this protein is Glutamyl-tRNA reductase.